The chain runs to 84 residues: Esculentin-1Vb (84 aa).

Positions 1–22 (MFTLKKPLLLIVLLGIISLSLC) are cleaved as a signal peptide. Residues 23-36 (EQERNADEDEESET) constitute a propeptide that is removed on maturation. Residues C78 and C84 are joined by a disulfide bond.

Expressed by the skin glands.

It is found in the secreted. In terms of biological role, antimicrobial peptide. The sequence is that of Esculentin-1Vb from Odorrana versabilis (Chinese bamboo leaf odorous frog).